Here is a 167-residue protein sequence, read N- to C-terminus: Lipoprotein signal peptidase (167 aa).

The next 3 membrane-spanning stretches (helical) occupy residues 10-30 (LIWLLLSIAIIALDQATKAWV), 68-88 (WQMWLFIALALGISGLLTFWL), and 98-118 (SALPYALIIGGGIGNVIDRFL). Active-site residues include Asp124 and Asp142. Residues 138–158 (FNLADSAIVAGAIGIGLLSLF) traverse the membrane as a helical segment.

The protein belongs to the peptidase A8 family.

The protein localises to the cell inner membrane. The enzyme catalyses Release of signal peptides from bacterial membrane prolipoproteins. Hydrolyzes -Xaa-Yaa-Zaa-|-(S,diacylglyceryl)Cys-, in which Xaa is hydrophobic (preferably Leu), and Yaa (Ala or Ser) and Zaa (Gly or Ala) have small, neutral side chains.. The protein operates within protein modification; lipoprotein biosynthesis (signal peptide cleavage). This protein specifically catalyzes the removal of signal peptides from prolipoproteins. In Xylella fastidiosa (strain 9a5c), this protein is Lipoprotein signal peptidase.